A 150-amino-acid chain; its full sequence is Flagellar assembly factor FliW (150 aa).

Belongs to the FliW family. Interacts with translational regulator CsrA and flagellin(s).

It is found in the cytoplasm. Functionally, acts as an anti-CsrA protein, binds CsrA and prevents it from repressing translation of its target genes, one of which is flagellin. Binds to flagellin and participates in the assembly of the flagellum. The polypeptide is Flagellar assembly factor FliW (Thermoanaerobacter pseudethanolicus (strain ATCC 33223 / 39E) (Clostridium thermohydrosulfuricum)).